Here is a 407-residue protein sequence, read N- to C-terminus: Multifunctional CCA protein (407 aa).

ATP is bound by residues Gly-8 and Arg-11. Gly-8 and Arg-11 together coordinate CTP. The Mg(2+) site is built by Asp-21 and Asp-23. ATP-binding residues include Arg-91, Arg-137, and Arg-140. Residues Arg-91, Arg-137, and Arg-140 each coordinate CTP. The HD domain occupies 228 to 329 (SGIHTLMVAQ…IKIFDKMDVW (102 aa)).

Belongs to the tRNA nucleotidyltransferase/poly(A) polymerase family. Bacterial CCA-adding enzyme type 1 subfamily. As to quaternary structure, monomer. Can also form homodimers and oligomers. Requires Mg(2+) as cofactor. Ni(2+) is required as a cofactor.

The catalysed reaction is a tRNA precursor + 2 CTP + ATP = a tRNA with a 3' CCA end + 3 diphosphate. It carries out the reaction a tRNA with a 3' CCA end + 2 CTP + ATP = a tRNA with a 3' CCACCA end + 3 diphosphate. Its function is as follows. Catalyzes the addition and repair of the essential 3'-terminal CCA sequence in tRNAs without using a nucleic acid template. Adds these three nucleotides in the order of C, C, and A to the tRNA nucleotide-73, using CTP and ATP as substrates and producing inorganic pyrophosphate. tRNA 3'-terminal CCA addition is required both for tRNA processing and repair. Also involved in tRNA surveillance by mediating tandem CCA addition to generate a CCACCA at the 3' terminus of unstable tRNAs. While stable tRNAs receive only 3'-terminal CCA, unstable tRNAs are marked with CCACCA and rapidly degraded. The sequence is that of Multifunctional CCA protein from Aliivibrio fischeri (strain MJ11) (Vibrio fischeri).